The chain runs to 525 residues: MLEKRHGDHHNANIKYGTFVLVISLLVVCYIAVRNLTQPEVRARTKRDLRLPLWLSVLLWTALVIGMGVIHVEELNEAAKRFGRLCYALLPLIVFLAIRPSPLPRTFYLKLLPLHKWLGRLATLVGVVHGVLYTVHFVKKNEFYKVFKFDNFLGVIILAVFLVMVVTSLPFFRKRMYSLFYTIHYLSAWFVAIATIFHARPGVGWLFFWVALFMGSSLLYRVLASSTVQIESTEAMGPDLHRVTFPRSILPEFFVPASHIRVSRTLRNPLSWISSTHPYTISSLPSDDHVELIVRPTKFSLAHAASGTQFAVYGPFESLPDDFFSTANRVLVFAGGAGISFALPVVQTLAKAGISHKLVWVLRNKAGVSEVESRLGETPTDIYITGQDPFLGEGVVYAKDAEGTAGLLSEDMEMEEIGQEDEDRERDELDDLLSEDEGSSSQDSTKGAHKNKGKDQDNGKREASQSITYHDGRPQPADTASAYFLDRSAPEGKWILACGPNGLVVTAEQAAKKTGVRFCNETYSM.

7 helical membrane-spanning segments follow: residues 13–33 (NIKYGTFVLVISLLVVCYIAV), 52–72 (PLWLSVLLWTALVIGMGVIHV), 82–102 (FGRLCYALLPLIVFLAIRPSP), 118–138 (LGRLATLVGVVHGVLYTVHFV), 152–172 (FLGVIILAVFLVMVVTSLPFF), 179–199 (LFYTIHYLSAWFVAIATIFHA), and 203–223 (VGWLFFWVALFMGSSLLYRVL). The Ferric oxidoreductase domain maps to 82–194 (FGRLCYALLP…YLSAWFVAIA (113 aa)). Residues 215 to 344 (GSSLLYRVLA…GGAGISFALP (130 aa)) enclose the FAD-binding FR-type domain. The disordered stretch occupies residues 407-478 (LLSEDMEMEE…YHDGRPQPAD (72 aa)). Positions 410–438 (EDMEMEEIGQEDEDRERDELDDLLSEDEG) are enriched in acidic residues. Over residues 453–463 (GKDQDNGKREA) the composition is skewed to basic and acidic residues.

Belongs to the ferric reductase (FRE) family. AIM14 subfamily.

It is found in the membrane. In terms of biological role, probable cell surface metalloreductase. May be involved in iron or copper homeostasis. The sequence is that of Probable metalloreductase AIM14 (AIM14) from Yarrowia lipolytica (strain CLIB 122 / E 150) (Yeast).